Consider the following 307-residue polypeptide: UDP-3-O-acyl-N-acetylglucosamine deacetylase (307 aa).

Zn(2+) contacts are provided by histidine 79, histidine 239, and aspartate 243. Histidine 266 (proton donor) is an active-site residue.

This sequence belongs to the LpxC family. Requires Zn(2+) as cofactor.

It catalyses the reaction a UDP-3-O-[(3R)-3-hydroxyacyl]-N-acetyl-alpha-D-glucosamine + H2O = a UDP-3-O-[(3R)-3-hydroxyacyl]-alpha-D-glucosamine + acetate. It participates in glycolipid biosynthesis; lipid IV(A) biosynthesis; lipid IV(A) from (3R)-3-hydroxytetradecanoyl-[acyl-carrier-protein] and UDP-N-acetyl-alpha-D-glucosamine: step 2/6. Functionally, catalyzes the hydrolysis of UDP-3-O-myristoyl-N-acetylglucosamine to form UDP-3-O-myristoylglucosamine and acetate, the committed step in lipid A biosynthesis. The protein is UDP-3-O-acyl-N-acetylglucosamine deacetylase of Tolumonas auensis (strain DSM 9187 / NBRC 110442 / TA 4).